A 336-amino-acid polypeptide reads, in one-letter code: Holliday junction branch migration complex subunit RuvB (336 aa).

The interval 4–184 (ADRLVSADSS…FGIVQRLEFY (181 aa)) is large ATPase domain (RuvB-L). Residues I23, R24, G65, K68, T69, T70, 131-133 (EDY), R174, Y184, and R221 each bind ATP. T69 is a Mg(2+) binding site. The interval 185–255 (QIPDLQHIVS…IAAQALDMLN (71 aa)) is small ATPAse domain (RuvB-S). Positions 258–336 (AEGFDYMDRK…HFGITPPEMP (79 aa)) are head domain (RuvB-H). Positions 294, 313, and 318 each coordinate DNA.

Belongs to the RuvB family. In terms of assembly, homohexamer. Forms an RuvA(8)-RuvB(12)-Holliday junction (HJ) complex. HJ DNA is sandwiched between 2 RuvA tetramers; dsDNA enters through RuvA and exits via RuvB. An RuvB hexamer assembles on each DNA strand where it exits the tetramer. Each RuvB hexamer is contacted by two RuvA subunits (via domain III) on 2 adjacent RuvB subunits; this complex drives branch migration. In the full resolvosome a probable DNA-RuvA(4)-RuvB(12)-RuvC(2) complex forms which resolves the HJ.

It is found in the cytoplasm. It carries out the reaction ATP + H2O = ADP + phosphate + H(+). Functionally, the RuvA-RuvB-RuvC complex processes Holliday junction (HJ) DNA during genetic recombination and DNA repair, while the RuvA-RuvB complex plays an important role in the rescue of blocked DNA replication forks via replication fork reversal (RFR). RuvA specifically binds to HJ cruciform DNA, conferring on it an open structure. The RuvB hexamer acts as an ATP-dependent pump, pulling dsDNA into and through the RuvAB complex. RuvB forms 2 homohexamers on either side of HJ DNA bound by 1 or 2 RuvA tetramers; 4 subunits per hexamer contact DNA at a time. Coordinated motions by a converter formed by DNA-disengaged RuvB subunits stimulates ATP hydrolysis and nucleotide exchange. Immobilization of the converter enables RuvB to convert the ATP-contained energy into a lever motion, pulling 2 nucleotides of DNA out of the RuvA tetramer per ATP hydrolyzed, thus driving DNA branch migration. The RuvB motors rotate together with the DNA substrate, which together with the progressing nucleotide cycle form the mechanistic basis for DNA recombination by continuous HJ branch migration. Branch migration allows RuvC to scan DNA until it finds its consensus sequence, where it cleaves and resolves cruciform DNA. In Klebsiella pneumoniae subsp. pneumoniae (strain ATCC 700721 / MGH 78578), this protein is Holliday junction branch migration complex subunit RuvB.